The primary structure comprises 120 residues: Large ribosomal subunit protein uL18 (120 aa).

It belongs to the universal ribosomal protein uL18 family. As to quaternary structure, part of the 50S ribosomal subunit; part of the 5S rRNA/L5/L18/L25 subcomplex. Contacts the 5S and 23S rRNAs.

In terms of biological role, this is one of the proteins that bind and probably mediate the attachment of the 5S RNA into the large ribosomal subunit, where it forms part of the central protuberance. This Rhizobium etli (strain ATCC 51251 / DSM 11541 / JCM 21823 / NBRC 15573 / CFN 42) protein is Large ribosomal subunit protein uL18.